The chain runs to 382 residues: Protein-arginine rhamnosyltransferase (382 aa).

Residues Asn17–Asp20, Tyr187, Gln252, and Arg268–Ser272 contribute to the dTDP-beta-L-rhamnose site. Asp20 functions as the Proton acceptor in the catalytic mechanism. Glu270 is a catalytic residue.

It belongs to the glycosyltransferase 104 family.

The catalysed reaction is dTDP-beta-L-rhamnose + L-arginyl-[protein] = N(omega)-(alpha-L-rhamnosyl)-L-arginyl-[protein] + dTDP + H(+). Protein-arginine rhamnosyltransferase that catalyzes the transfer of a single rhamnose to elongation factor P (EF-P) on 'Lys-32', a modification required for EF-P-dependent rescue of polyproline stalled ribosomes. The sequence is that of Protein-arginine rhamnosyltransferase from Neisseria meningitidis.